Reading from the N-terminus, the 128-residue chain is Fluoride-specific ion channel FluC (128 aa).

The next 4 helical transmembrane spans lie at 1 to 21 (MPER…GATA), 45 to 65 (LAGC…SLVS), 70 to 90 (LLLA…MYEI), and 99 to 119 (IFYS…CLYF). Na(+) contacts are provided by glycine 78 and threonine 81.

It belongs to the fluoride channel Fluc/FEX (TC 1.A.43) family.

The protein resides in the cell inner membrane. The enzyme catalyses fluoride(in) = fluoride(out). Its activity is regulated as follows. Na(+) is not transported, but it plays an essential structural role and its presence is essential for fluoride channel function. Functionally, fluoride-specific ion channel. Important for reducing fluoride concentration in the cell, thus reducing its toxicity. The protein is Fluoride-specific ion channel FluC of Chlorobium phaeobacteroides (strain BS1).